The chain runs to 421 residues: UDP-N-acetylglucosamine 1-carboxyvinyltransferase (421 aa).

22–23 is a phosphoenolpyruvate binding site; that stretch reads KN. A UDP-N-acetyl-alpha-D-glucosamine-binding site is contributed by Arg92. Cys116 serves as the catalytic Proton donor. Cys116 carries the post-translational modification 2-(S-cysteinyl)pyruvic acid O-phosphothioketal. The UDP-N-acetyl-alpha-D-glucosamine site is built by Asp306 and Val328.

It belongs to the EPSP synthase family. MurA subfamily.

It localises to the cytoplasm. It catalyses the reaction phosphoenolpyruvate + UDP-N-acetyl-alpha-D-glucosamine = UDP-N-acetyl-3-O-(1-carboxyvinyl)-alpha-D-glucosamine + phosphate. It functions in the pathway cell wall biogenesis; peptidoglycan biosynthesis. In terms of biological role, cell wall formation. Adds enolpyruvyl to UDP-N-acetylglucosamine. This Thermotoga maritima (strain ATCC 43589 / DSM 3109 / JCM 10099 / NBRC 100826 / MSB8) protein is UDP-N-acetylglucosamine 1-carboxyvinyltransferase.